A 262-amino-acid polypeptide reads, in one-letter code: Thrombin-like enzyme calobin-1 (262 aa).

An N-terminal signal peptide occupies residues 1 to 18; it reads MVLISVLANLLILQLSYA. Residues 19-24 constitute a propeptide that is removed on maturation; sequence QKSSEL. Positions 25-253 constitute a Peptidase S1 domain; the sequence is VIGGDECNIN…HLDWIQSIIA (229 aa). Intrachain disulfides connect Cys-31–Cys-165, Cys-52–Cys-68, Cys-100–Cys-260, Cys-144–Cys-214, Cys-176–Cys-193, and Cys-204–Cys-229. His-67 serves as the catalytic Charge relay system. N-linked (GlcNAc...) asparagine glycosylation is present at Asn-105. Residue Asp-112 is the Charge relay system of the active site. Catalysis depends on Ser-208, which acts as the Charge relay system.

It belongs to the peptidase S1 family. Snake venom subfamily. As to quaternary structure, monomer. N-glycosylated. In terms of tissue distribution, expressed by the venom gland.

It is found in the secreted. Its activity is regulated as follows. Strongly inhibited by PMSF, and moderately by benzamidine and soybean trypsin inhibitor. Its function is as follows. Thrombin-like snake venom serine protease. Has a coagulant activity. Acts on alpha-chains of fibrinogen (FGA) generating fibrinopeptide A. The protein is Thrombin-like enzyme calobin-1 of Gloydius ussuriensis (Ussuri mamushi).